Consider the following 335-residue polypeptide: S-adenosylmethionine decarboxylase proenzyme (335 aa).

Catalysis depends on residues Glu12 and Glu15. Residue Ser70 is the Schiff-base intermediate with substrate; via pyruvic acid of the active site. Residue Ser70 is modified to Pyruvic acid (Ser); by autocatalysis. The active-site Proton donor; for catalytic activity is the Cys84. Residues Ser231 and His245 each act as proton acceptor; for processing activity in the active site.

It belongs to the eukaryotic AdoMetDC family. Requires pyruvate as cofactor. Is synthesized initially as an inactive proenzyme. Formation of the active enzyme involves a self-maturation process in which the active site pyruvoyl group is generated from an internal serine residue via an autocatalytic post-translational modification. Two non-identical subunits are generated from the proenzyme in this reaction, and the pyruvate is formed at the N-terminus of the alpha chain, which is derived from the carboxyl end of the proenzyme. The post-translation cleavage follows an unusual pathway, termed non-hydrolytic serinolysis, in which the side chain hydroxyl group of the serine supplies its oxygen atom to form the C-terminus of the beta chain, while the remainder of the serine residue undergoes an oxidative deamination to produce ammonia and the pyruvoyl group blocking the N-terminus of the alpha chain.

The enzyme catalyses S-adenosyl-L-methionine + H(+) = S-adenosyl 3-(methylsulfanyl)propylamine + CO2. Its pathway is amine and polyamine biosynthesis; S-adenosylmethioninamine biosynthesis; S-adenosylmethioninamine from S-adenosyl-L-methionine: step 1/1. In terms of biological role, essential for biosynthesis of the polyamines spermidine and spermine. Promotes maintenance and self-renewal of embryonic stem cells, by maintaining spermine levels. This is S-adenosylmethionine decarboxylase proenzyme (amd1) from Xenopus laevis (African clawed frog).